The chain runs to 376 residues: Cyclin-dependent kinase 9-A (376 aa).

A Protein kinase domain is found at tyrosine 19 to phenylalanine 319. ATP contacts are provided by residues isoleucine 25–valine 33 and lysine 48. Aspartate 153 (proton acceptor) is an active-site residue. Residues proline 345–phenylalanine 376 form a disordered region. Residues proline 354–glutamine 369 are compositionally biased toward low complexity.

This sequence belongs to the protein kinase superfamily. CMGC Ser/Thr protein kinase family. CDC2/CDKX subfamily. Associates with cyclin-T to form P-TEFb.

The protein resides in the nucleus. It carries out the reaction L-seryl-[protein] + ATP = O-phospho-L-seryl-[protein] + ADP + H(+). It catalyses the reaction L-threonyl-[protein] + ATP = O-phospho-L-threonyl-[protein] + ADP + H(+). The catalysed reaction is [DNA-directed RNA polymerase] + ATP = phospho-[DNA-directed RNA polymerase] + ADP + H(+). Functionally, member of the cyclin-dependent kinase pair (CDK9/cyclin-T) complex, also called positive transcription elongation factor B (P-TEFb), which is proposed to facilitate the transition from abortive to production elongation by phosphorylating the CTD (C-terminal domain) of the large subunit of RNA polymerase II (RNAP II) and SUPT5H. This chain is Cyclin-dependent kinase 9-A (cdk9-a), found in Xenopus laevis (African clawed frog).